The primary structure comprises 382 residues: uncharacterized protein (382 aa).

The next 11 helical transmembrane spans lie at 8–28 (VMLLLCGLLLLTLAIAVLNTL), 45–65 (MVSSSYFTGNLVGTLFTGYLI), 75–95 (YLASLIFAAGCVGLGGMVGFW), 102–122 (FIAGIGCAMIWVVVESALMCS), 131–151 (LLAAYMMAYYMGTFLGQLLVS), 157–177 (LLHVLPWVTGMILAGILPLLF), 204–224 (LGVNGCIISGIVLGSLYGLMP), 231–251 (GMANASIGFWMAVLVSAGILG), 274–294 (VVILGSIAMLTQAAMAPALFI), 325–345 (ALLLSYTVGSLLGPSFAAMLM), and 349–369 (SDNLLFIMIASVSFIYLLMLL).

This sequence belongs to the major facilitator superfamily. YcaD (TC 2.A.1.26) family.

It localises to the cell inner membrane. This is an uncharacterized protein from Salmonella gallinarum (strain 287/91 / NCTC 13346).